Here is a 500-residue protein sequence, read N- to C-terminus: Glucose-1-phosphate adenylyltransferase large subunit, chloroplastic/amyloplastic (500 aa).

A chloroplast-targeting transit peptide spans 1 to 33 (RASPPSESRAPLRAPQRSATRQHQARQGPRRMC). Residues 1 to 47 (RASPPSESRAPLRAPQRSATRQHQARQGPRRMCNGGRGPPYWTAGVT) form a disordered region.

Belongs to the bacterial/plant glucose-1-phosphate adenylyltransferase family. In terms of assembly, heterotetramer.

It is found in the plastid. Its subcellular location is the chloroplast. The protein localises to the amyloplast. The enzyme catalyses alpha-D-glucose 1-phosphate + ATP + H(+) = ADP-alpha-D-glucose + diphosphate. It functions in the pathway glycan biosynthesis; starch biosynthesis. With respect to regulation, insensitive to 3'phosphoglycerate and orthophosphate. Its function is as follows. This protein plays a role in synthesis of starch. It catalyzes the synthesis of the activated glycosyl donor, ADP-glucose from Glc-1-P and ATP. The chain is Glucose-1-phosphate adenylyltransferase large subunit, chloroplastic/amyloplastic (AGA.7) from Triticum aestivum (Wheat).